A 481-amino-acid chain; its full sequence is Tryptophan 5-hydroxylase (481 aa).

One can recognise an ACT domain in the interval 56–131 (SVIFSLKNEI…NVISMSPPEN (76 aa)). 3 residues coordinate L-tryptophan: Tyr-272, Arg-294, and Thr-302. 3 residues coordinate Fe cation: His-309, His-314, and Glu-354. 2 residues coordinate L-tryptophan: Ser-373 and Ile-403.

It belongs to the biopterin-dependent aromatic amino acid hydroxylase family. Homotetramer. The cofactor is Fe(2+).

The catalysed reaction is (6R)-L-erythro-5,6,7,8-tetrahydrobiopterin + L-tryptophan + O2 = 5-hydroxy-L-tryptophan + (4aS,6R)-4a-hydroxy-L-erythro-5,6,7,8-tetrahydrobiopterin. Its pathway is aromatic compound metabolism; serotonin biosynthesis; serotonin from L-tryptophan: step 1/2. Oxidizes L-tryptophan to 5-hydroxy-l-tryptophan in the rate-determining step of serotonin biosynthesis. This chain is Tryptophan 5-hydroxylase (tph1), found in Xenopus laevis (African clawed frog).